The chain runs to 308 residues: Ribosomal RNA small subunit methyltransferase H (308 aa).

S-adenosyl-L-methionine is bound by residues 38–40 (GGH), D58, F82, D99, and Q106.

The protein belongs to the methyltransferase superfamily. RsmH family.

It is found in the cytoplasm. The catalysed reaction is cytidine(1402) in 16S rRNA + S-adenosyl-L-methionine = N(4)-methylcytidine(1402) in 16S rRNA + S-adenosyl-L-homocysteine + H(+). In terms of biological role, specifically methylates the N4 position of cytidine in position 1402 (C1402) of 16S rRNA. The protein is Ribosomal RNA small subunit methyltransferase H of Acidovorax sp. (strain JS42).